The chain runs to 211 residues: tRNA (guanine-N(7)-)-methyltransferase (211 aa).

S-adenosyl-L-methionine-binding residues include E43, D68, N95, and N117. Substrate contacts are provided by residues K121, D153, and 190 to 193; that span reads TEYE.

Belongs to the class I-like SAM-binding methyltransferase superfamily. TrmB family.

It carries out the reaction guanosine(46) in tRNA + S-adenosyl-L-methionine = N(7)-methylguanosine(46) in tRNA + S-adenosyl-L-homocysteine. Its pathway is tRNA modification; N(7)-methylguanine-tRNA biosynthesis. Its function is as follows. Catalyzes the formation of N(7)-methylguanine at position 46 (m7G46) in tRNA. The polypeptide is tRNA (guanine-N(7)-)-methyltransferase (Clostridium kluyveri (strain ATCC 8527 / DSM 555 / NBRC 12016 / NCIMB 10680 / K1)).